The chain runs to 503 residues: Probable cytosol aminopeptidase (503 aa).

The Mn(2+) site is built by Lys271 and Asp276. Lys283 is an active-site residue. Residues Asp294, Asp353, and Glu355 each contribute to the Mn(2+) site. Arg357 is an active-site residue.

The protein belongs to the peptidase M17 family. It depends on Mn(2+) as a cofactor.

Its subcellular location is the cytoplasm. It carries out the reaction Release of an N-terminal amino acid, Xaa-|-Yaa-, in which Xaa is preferably Leu, but may be other amino acids including Pro although not Arg or Lys, and Yaa may be Pro. Amino acid amides and methyl esters are also readily hydrolyzed, but rates on arylamides are exceedingly low.. It catalyses the reaction Release of an N-terminal amino acid, preferentially leucine, but not glutamic or aspartic acids.. Functionally, presumably involved in the processing and regular turnover of intracellular proteins. Catalyzes the removal of unsubstituted N-terminal amino acids from various peptides. In Chlorobaculum parvum (strain DSM 263 / NCIMB 8327) (Chlorobium vibrioforme subsp. thiosulfatophilum), this protein is Probable cytosol aminopeptidase.